Consider the following 401-residue polypeptide: 3-hydroxyisobutyryl-CoA hydrolase-like protein 1, mitochondrial (401 aa).

Residues 1–26 constitute a mitochondrion transit peptide; the sequence is MHNAKGLLGRIVRDKLWRFGYRRSLC.

Belongs to the enoyl-CoA hydratase/isomerase family.

It localises to the mitochondrion. In Arabidopsis thaliana (Mouse-ear cress), this protein is 3-hydroxyisobutyryl-CoA hydrolase-like protein 1, mitochondrial.